The chain runs to 142 residues: MSDREFSSNDDLSLPKATVQKIITEILPPSSGQTFSKDARDLLMECCVEFITLISSEANDISEKEAKKTIACEHVERALRDLGFGDYIPEVLAVAEEHKEQLKSREKKQSKMEQSGLTEEELLRQQQELFRSATEKYNAAPE.

Belongs to the NC2 beta/DR1 family. In terms of assembly, forms the NCT transcriptional regulatory complex with nctA and mot1.

The protein resides in the nucleus. Its function is as follows. Part of the NCT transcriptional regulatory complex that acts as a key regulator of ergosterol biosynthesis and the azole exporter cdr1B. The NCT complex binds the promoters of genes linked to azole susceptibility, and especially represses the expression of cdr1B transporter. This is NCT transcriptional regulatory complex subunit B from Aspergillus fumigatus (strain CBS 144.89 / FGSC A1163 / CEA10) (Neosartorya fumigata).